The following is a 374-amino-acid chain: Beta sliding clamp (374 aa).

This sequence belongs to the beta sliding clamp family. In terms of assembly, forms a ring-shaped head-to-tail homodimer around DNA which binds and tethers DNA polymerases and other proteins to the DNA. The DNA replisome complex has a single clamp-loading complex (3 tau and 1 each of delta, delta', psi and chi subunits) which binds 3 Pol III cores (1 core on the leading strand and 2 on the lagging strand) each with a beta sliding clamp dimer. Additional proteins in the replisome are other copies of gamma, psi and chi, Ssb, DNA helicase and RNA primase.

The protein resides in the cytoplasm. Its function is as follows. Confers DNA tethering and processivity to DNA polymerases and other proteins. Acts as a clamp, forming a ring around DNA (a reaction catalyzed by the clamp-loading complex) which diffuses in an ATP-independent manner freely and bidirectionally along dsDNA. Initially characterized for its ability to contact the catalytic subunit of DNA polymerase III (Pol III), a complex, multichain enzyme responsible for most of the replicative synthesis in bacteria; Pol III exhibits 3'-5' exonuclease proofreading activity. The beta chain is required for initiation of replication as well as for processivity of DNA replication. The chain is Beta sliding clamp (dnaN) from Helicobacter pylori (strain ATCC 700392 / 26695) (Campylobacter pylori).